A 340-amino-acid chain; its full sequence is Polyporopepsin (340 aa).

Residues Y14 to A330 enclose the Peptidase A1 domain. The active site involves D32. N192 carries N-linked (GlcNAc...) asparagine glycosylation. The active site involves D212. A glycan (N-linked (GlcNAc...) asparagine) is linked at N238.

The protein belongs to the peptidase A1 family.

The catalysed reaction is Milk clotting activity, broad specificity, but fails to cleave 15-Leu-|-Tyr-16 or 16-Tyr-|-Leu-17 of insulin B chain.. This Irpex lacteus (Milk-white toothed polypore) protein is Polyporopepsin.